A 509-amino-acid polypeptide reads, in one-letter code: Glutamyl-tRNA(Gln) amidotransferase subunit A (509 aa).

Catalysis depends on charge relay system residues lysine 75 and serine 150. The Acyl-ester intermediate role is filled by serine 174. Residues 471–509 (DWHKRRPPLGQPPLEQAQGTAQQPKAKSKSTKGSKKSKS) form a disordered region. A compositionally biased stretch (basic residues) spans 496–509 (AKSKSTKGSKKSKS).

Belongs to the amidase family. GatA subfamily. As to quaternary structure, heterotrimer of A, B and C subunits.

It catalyses the reaction L-glutamyl-tRNA(Gln) + L-glutamine + ATP + H2O = L-glutaminyl-tRNA(Gln) + L-glutamate + ADP + phosphate + H(+). Its function is as follows. Allows the formation of correctly charged Gln-tRNA(Gln) through the transamidation of misacylated Glu-tRNA(Gln) in organisms which lack glutaminyl-tRNA synthetase. The reaction takes place in the presence of glutamine and ATP through an activated gamma-phospho-Glu-tRNA(Gln). This Synechococcus sp. (strain JA-3-3Ab) (Cyanobacteria bacterium Yellowstone A-Prime) protein is Glutamyl-tRNA(Gln) amidotransferase subunit A.